A 214-amino-acid polypeptide reads, in one-letter code: Small ribosomal subunit protein uS5 (214 aa).

The interval 1 to 61 (MTDSSPQSNP…QERDSEWQER (61 aa)) is disordered. The span at 9-29 (NPNAVPGAADVPAAAEGQQQQ) shows a compositional bias: low complexity. Residues 30–60 (EQRRGRGDRDGRRGDRRGGRRGQERDSEWQE) are compositionally biased toward basic and acidic residues. In terms of domain architecture, S5 DRBM spans 58-121 (WQERVVQIRR…ADGKKHLVKV (64 aa)).

The protein belongs to the universal ribosomal protein uS5 family. Part of the 30S ribosomal subunit. Contacts proteins S4 and S8.

In terms of biological role, with S4 and S12 plays an important role in translational accuracy. Located at the back of the 30S subunit body where it stabilizes the conformation of the head with respect to the body. This is Small ribosomal subunit protein uS5 from Synechococcus sp. (strain CC9605).